A 318-amino-acid chain; its full sequence is GTP 3',8-cyclase (318 aa).

The Radical SAM core domain occupies 4–218 (KHGRNIDYLR…MSRSDLIPIE (215 aa)). A GTP-binding site is contributed by Arg13. Cys20 and Cys24 together coordinate [4Fe-4S] cluster. Tyr26 serves as a coordination point for S-adenosyl-L-methionine. Cys27 provides a ligand contact to [4Fe-4S] cluster. Arg62 serves as a coordination point for GTP. S-adenosyl-L-methionine is bound at residue Gly66. Thr93 is a binding site for GTP. Ser117 provides a ligand contact to S-adenosyl-L-methionine. Residue Lys154 participates in GTP binding. Met188 contributes to the S-adenosyl-L-methionine binding site. Residues Cys248 and Cys251 each contribute to the [4Fe-4S] cluster site. 253–255 (KIR) lines the GTP pocket. Position 265 (Cys265) interacts with [4Fe-4S] cluster.

Belongs to the radical SAM superfamily. MoaA family. In terms of assembly, monomer and homodimer. The cofactor is [4Fe-4S] cluster.

It catalyses the reaction GTP + AH2 + S-adenosyl-L-methionine = (8S)-3',8-cyclo-7,8-dihydroguanosine 5'-triphosphate + 5'-deoxyadenosine + L-methionine + A + H(+). It functions in the pathway cofactor biosynthesis; molybdopterin biosynthesis. Its function is as follows. Catalyzes the cyclization of GTP to (8S)-3',8-cyclo-7,8-dihydroguanosine 5'-triphosphate. This Clostridium acetobutylicum (strain ATCC 824 / DSM 792 / JCM 1419 / IAM 19013 / LMG 5710 / NBRC 13948 / NRRL B-527 / VKM B-1787 / 2291 / W) protein is GTP 3',8-cyclase.